The primary structure comprises 835 residues: Phenylalanine--tRNA ligase beta subunit (835 aa).

In terms of domain architecture, tRNA-binding spans 44–160 (PATTGPLVLG…ESGQPGDDAR (117 aa)). The 76-residue stretch at 419-494 (PTMPSITMPV…RLEGLEAIPT (76 aa)) folds into the B5 domain. Residues Asp472, Asp478, Glu481, and Glu482 each contribute to the Mg(2+) site. An FDX-ACB domain is found at 741–834 (SAFPALHQDI…AKERLGAEMR (94 aa)).

Belongs to the phenylalanyl-tRNA synthetase beta subunit family. Type 1 subfamily. Tetramer of two alpha and two beta subunits. The cofactor is Mg(2+).

It is found in the cytoplasm. The catalysed reaction is tRNA(Phe) + L-phenylalanine + ATP = L-phenylalanyl-tRNA(Phe) + AMP + diphosphate + H(+). The polypeptide is Phenylalanine--tRNA ligase beta subunit (Corynebacterium efficiens (strain DSM 44549 / YS-314 / AJ 12310 / JCM 11189 / NBRC 100395)).